The primary structure comprises 199 residues: GTP cyclohydrolase-2 (199 aa).

49–53 contacts GTP; sequence RVHSE. Zn(2+) contacts are provided by cysteine 54, cysteine 65, and cysteine 67. GTP is bound by residues glutamine 70, 92 to 94, and threonine 114; that span reads EGR. Aspartate 126 functions as the Proton acceptor in the catalytic mechanism. The active-site Nucleophile is the arginine 128. The GTP site is built by threonine 149 and lysine 154.

The protein belongs to the GTP cyclohydrolase II family. Zn(2+) is required as a cofactor.

The enzyme catalyses GTP + 4 H2O = 2,5-diamino-6-hydroxy-4-(5-phosphoribosylamino)-pyrimidine + formate + 2 phosphate + 3 H(+). Its pathway is cofactor biosynthesis; riboflavin biosynthesis; 5-amino-6-(D-ribitylamino)uracil from GTP: step 1/4. Functionally, catalyzes the conversion of GTP to 2,5-diamino-6-ribosylamino-4(3H)-pyrimidinone 5'-phosphate (DARP), formate and pyrophosphate. The protein is GTP cyclohydrolase-2 of Baumannia cicadellinicola subsp. Homalodisca coagulata.